The sequence spans 69 residues: Parvalbumin beta 3 (69 aa).

At Ala-1 the chain carries N-acetylalanine. The region spanning 24-59 (FNYKTFFKFFAIIDQDHSGFIEEEELKLFLQTFSAG) is the EF-hand domain. Ca(2+) is bound by residues Asp-37, Asp-39, Ser-41, Phe-43, Glu-45, and Glu-48.

The protein belongs to the parvalbumin family.

In terms of biological role, in muscle, parvalbumin is thought to be involved in relaxation after contraction. It binds two calcium ions. The protein is Parvalbumin beta 3 of Merluccius polli (Benguela hake).